We begin with the raw amino-acid sequence, 89 residues long: Putative membrane protein insertion efficiency factor (89 aa).

This sequence belongs to the UPF0161 family.

It is found in the cell inner membrane. Its function is as follows. Could be involved in insertion of integral membrane proteins into the membrane. The sequence is that of Putative membrane protein insertion efficiency factor from Petrotoga mobilis (strain DSM 10674 / SJ95).